The following is a 146-amino-acid chain: Core protein D2 (146 aa).

It belongs to the orthopoxvirus OPG114 family. Part of a complex composed of the kinase OPG054, OPG092, OPG100, OPG114, OPG115, OPG142 and OPG157.

It localises to the virion. In terms of biological role, late protein which is part of a large complex required for early virion morphogenesis. This complex participates in the formation of virosomes and the incorporation of virosomal contents into nascent immature virions. The polypeptide is Core protein D2 (OPG114) (Homo sapiens (Human)).